We begin with the raw amino-acid sequence, 395 residues long: S-adenosylmethionine synthase (395 aa).

ATP is bound at residue His14. Asp16 is a Mg(2+) binding site. Residue Glu42 coordinates K(+). Residues Glu55 and Gln98 each contribute to the L-methionine site. The segment at 98-108 (QSPDIAMGVNK) is flexible loop. ATP is bound by residues 174-176 (DGK), 240-241 (RF), Asp249, 255-256 (RK), Ala272, and Lys276. Asp249 is an L-methionine binding site. Residue Lys280 participates in L-methionine binding.

The protein belongs to the AdoMet synthase family. Homotetramer; dimer of dimers. Requires Mg(2+) as cofactor. It depends on K(+) as a cofactor.

It localises to the cytoplasm. The enzyme catalyses L-methionine + ATP + H2O = S-adenosyl-L-methionine + phosphate + diphosphate. It participates in amino-acid biosynthesis; S-adenosyl-L-methionine biosynthesis; S-adenosyl-L-methionine from L-methionine: step 1/1. Functionally, catalyzes the formation of S-adenosylmethionine (AdoMet) from methionine and ATP. The overall synthetic reaction is composed of two sequential steps, AdoMet formation and the subsequent tripolyphosphate hydrolysis which occurs prior to release of AdoMet from the enzyme. The polypeptide is S-adenosylmethionine synthase (Caldanaerobacter subterraneus subsp. tengcongensis (strain DSM 15242 / JCM 11007 / NBRC 100824 / MB4) (Thermoanaerobacter tengcongensis)).